A 162-amino-acid polypeptide reads, in one-letter code: UPF0262 protein Acry_0160 (162 aa).

The protein belongs to the UPF0262 family.

This is UPF0262 protein Acry_0160 from Acidiphilium cryptum (strain JF-5).